Here is a 763-residue protein sequence, read N- to C-terminus: Translation initiation factor IF-2 (763 aa).

Residues 52–178 (KQKKVQTSQN…KDEAIKHETK (127 aa)) form a disordered region. The segment covering 65-82 (SNDENKKITNKNTEKTTE) has biased composition (basic and acidic residues). Over residues 86–96 (TVDSNKQNNSN) the composition is skewed to polar residues. 2 stretches are compositionally biased toward basic and acidic residues: residues 105–116 (RNNDEESVSHFD) and 123–135 (KSEMNEKRDLNDK). A compositionally biased stretch (basic residues) spans 136–145 (KKNKNFKNTK). The segment covering 146–161 (NKNSNNNKNSKNNKNN) has biased composition (low complexity). The span at 162-178 (KNNDHNRKDEAIKHETK) shows a compositional bias: basic and acidic residues. The 170-residue stretch at 265-434 (ERPPVITVMG…LMVAEMEELK (170 aa)) folds into the tr-type G domain. A G1 region spans residues 274-281 (GHVDHGKT). 274–281 (GHVDHGKT) is a GTP binding site. Positions 299–303 (GITQH) are G2. The G3 stretch occupies residues 320–323 (DTPG). GTP-binding positions include 320 to 324 (DTPGH) and 374 to 377 (NKID). Positions 374 to 377 (NKID) are G4. Residues 410-412 (SAR) form a G5 region.

The protein belongs to the TRAFAC class translation factor GTPase superfamily. Classic translation factor GTPase family. IF-2 subfamily.

The protein localises to the cytoplasm. Functionally, one of the essential components for the initiation of protein synthesis. Protects formylmethionyl-tRNA from spontaneous hydrolysis and promotes its binding to the 30S ribosomal subunits. Also involved in the hydrolysis of GTP during the formation of the 70S ribosomal complex. The chain is Translation initiation factor IF-2 from Finegoldia magna (strain ATCC 29328 / DSM 20472 / WAL 2508) (Peptostreptococcus magnus).